A 396-amino-acid chain; its full sequence is Bone morphogenetic protein 2 (396 aa).

The first 23 residues, 1 to 23 (MVAGTRCLLALLLPQVLLGGAAG), serve as a signal peptide directing secretion. Positions 24–282 (LIPELGRRKF…GHPLHRREKR (259 aa)) are cleaved as a propeptide — cleaved by PCSK5. Residue S87 is modified to Phosphoserine. 4 N-linked (GlcNAc...) asparagine glycosylation sites follow: N135, N163, N164, and N200. The tract at residues 272-293 (KGHPLHRREKRQAKHKQRKRLK) is disordered. Over residues 274–293 (HPLHRREKRQAKHKQRKRLK) the composition is skewed to basic residues. Intrachain disulfides connect C296–C361, C325–C393, and C329–C395. Residue N338 is glycosylated (N-linked (GlcNAc...) asparagine).

Belongs to the TGF-beta family. Homodimer; disulfide-linked. Interacts with SOSTDC1. Interacts with GREM2, RGMA, RGMB and RGMC. Interacts with ASPN. Interacts with MAFP5. Interacts with FBN1 (via N-terminal domain) and FBN2. Interacts with type I receptor BMPR1A. Interacts with type II receptor BMPR2. Interacts with ERFE. Interacts with BMPR1A/ALK3; the interaction may induce HAMP expression. Interacts with TGFBR3.

It is found in the secreted. Growth factor of the TGF-beta superfamily that plays essential roles in many developmental processes, including cardiogenesis, neurogenesis, and osteogenesis. Induces cartilage and bone formation. Initiates the canonical BMP signaling cascade by associating with type I receptor BMPR1A and type II receptor BMPR2. Once all three components are bound together in a complex at the cell surface, BMPR2 phosphorylates and activates BMPR1A. In turn, BMPR1A propagates signal by phosphorylating SMAD1/5/8 that travel to the nucleus and act as activators and repressors of transcription of target genes. Also acts to promote expression of HAMP, via the interaction with its receptor BMPR1A/ALK3. Can also signal through non-canonical pathways such as ERK/MAP kinase signaling cascade that regulates osteoblast differentiation. Also stimulates the differentiation of myoblasts into osteoblasts via the EIF2AK3-EIF2A-ATF4 pathway by stimulating EIF2A phosphorylation which leads to increased expression of ATF4 which plays a central role in osteoblast differentiation. Acts as a positive regulator of odontoblast differentiation during mesenchymal tooth germ formation, expression is repressed during the bell stage by MSX1-mediated inhibition of CTNNB1 signaling. The chain is Bone morphogenetic protein 2 (BMP2) from Dama dama (Fallow deer).